A 281-amino-acid polypeptide reads, in one-letter code: Small ribosomal subunit protein uS3 (281 aa).

A KH type-2 domain is found at 38-106 (IRRLLSTGLE…QVQLNILEVK (69 aa)). Residues 218–281 (APAGAERARR…VTHEPQIAES (64 aa)) are disordered. Over residues 238 to 256 (SGAAGTTVTGTDAGRAVGG) the composition is skewed to low complexity.

This sequence belongs to the universal ribosomal protein uS3 family. As to quaternary structure, part of the 30S ribosomal subunit. Forms a tight complex with proteins S10 and S14.

In terms of biological role, binds the lower part of the 30S subunit head. Binds mRNA in the 70S ribosome, positioning it for translation. The chain is Small ribosomal subunit protein uS3 from Mycobacterium leprae (strain Br4923).